The sequence spans 240 residues: Large ribosomal subunit protein bL25 (240 aa).

The disordered stretch occupies residues 1–23; it reads MATVKELKATARPKAGKGAARAE. Residues 10–19 show a composition bias toward low complexity; that stretch reads TARPKAGKGA.

The protein belongs to the bacterial ribosomal protein bL25 family. CTC subfamily. Part of the 50S ribosomal subunit; part of the 5S rRNA/L5/L18/L25 subcomplex. Contacts the 5S rRNA. Binds to the 5S rRNA independently of L5 and L18.

This is one of the proteins that binds to the 5S RNA in the ribosome where it forms part of the central protuberance. This is Large ribosomal subunit protein bL25 from Afipia carboxidovorans (strain ATCC 49405 / DSM 1227 / KCTC 32145 / OM5) (Oligotropha carboxidovorans).